Reading from the N-terminus, the 427-residue chain is Serine--tRNA ligase (427 aa).

Residue 233–235 (TAE) coordinates L-serine. 264–266 (RSE) is an ATP binding site. Residue Glu-287 coordinates L-serine. 351-354 (EISS) lines the ATP pocket. Ser-386 contributes to the L-serine binding site.

This sequence belongs to the class-II aminoacyl-tRNA synthetase family. Type-1 seryl-tRNA synthetase subfamily. As to quaternary structure, homodimer. The tRNA molecule binds across the dimer.

The protein localises to the cytoplasm. It carries out the reaction tRNA(Ser) + L-serine + ATP = L-seryl-tRNA(Ser) + AMP + diphosphate + H(+). The catalysed reaction is tRNA(Sec) + L-serine + ATP = L-seryl-tRNA(Sec) + AMP + diphosphate + H(+). The protein operates within aminoacyl-tRNA biosynthesis; selenocysteinyl-tRNA(Sec) biosynthesis; L-seryl-tRNA(Sec) from L-serine and tRNA(Sec): step 1/1. Functionally, catalyzes the attachment of serine to tRNA(Ser). Is also able to aminoacylate tRNA(Sec) with serine, to form the misacylated tRNA L-seryl-tRNA(Sec), which will be further converted into selenocysteinyl-tRNA(Sec). The polypeptide is Serine--tRNA ligase (Dechloromonas aromatica (strain RCB)).